The chain runs to 670 residues: Beta-lactam-inducible penicillin-binding protein (670 aa).

Residues 4-24 form a helical membrane-spanning segment; it reads IKIVPLILIVVVVGFGIYFYA. The a penicillin site is built by serine 25 and serine 405. Serine 405 (acyl-ester intermediate) is an active-site residue.

This sequence belongs to the transpeptidase family.

Its subcellular location is the cell membrane. In Staphylococcus aureus, this protein is Beta-lactam-inducible penicillin-binding protein (pbp).